The chain runs to 156 residues: Small ribosomal subunit protein uS7 (156 aa).

This sequence belongs to the universal ribosomal protein uS7 family. As to quaternary structure, part of the 30S ribosomal subunit. Contacts proteins S9 and S11.

Its function is as follows. One of the primary rRNA binding proteins, it binds directly to 16S rRNA where it nucleates assembly of the head domain of the 30S subunit. Is located at the subunit interface close to the decoding center, probably blocks exit of the E-site tRNA. The polypeptide is Small ribosomal subunit protein uS7 (Azorhizobium caulinodans (strain ATCC 43989 / DSM 5975 / JCM 20966 / LMG 6465 / NBRC 14845 / NCIMB 13405 / ORS 571)).